Consider the following 529-residue polypeptide: Arginine--tRNA ligase (529 aa).

The 'HIGH' region motif lies at 113–123 (ANPTGPLHIGH).

It belongs to the class-I aminoacyl-tRNA synthetase family. In terms of assembly, monomer.

Its subcellular location is the cytoplasm. The catalysed reaction is tRNA(Arg) + L-arginine + ATP = L-arginyl-tRNA(Arg) + AMP + diphosphate. This Campylobacter curvus (strain 525.92) protein is Arginine--tRNA ligase.